Here is a 157-residue protein sequence, read N- to C-terminus: ATP synthase subunit b (157 aa).

The helical transmembrane segment at 11-31 (LIMFAMFTWFCMKFIWPPIVM) threads the bilayer.

It belongs to the ATPase B chain family. In terms of assembly, F-type ATPases have 2 components, F(1) - the catalytic core - and F(0) - the membrane proton channel. F(1) has five subunits: alpha(3), beta(3), gamma(1), delta(1), epsilon(1). F(0) has three main subunits: a(1), b(2) and c(10-14). The alpha and beta chains form an alternating ring which encloses part of the gamma chain. F(1) is attached to F(0) by a central stalk formed by the gamma and epsilon chains, while a peripheral stalk is formed by the delta and b chains.

The protein resides in the cell inner membrane. In terms of biological role, f(1)F(0) ATP synthase produces ATP from ADP in the presence of a proton or sodium gradient. F-type ATPases consist of two structural domains, F(1) containing the extramembraneous catalytic core and F(0) containing the membrane proton channel, linked together by a central stalk and a peripheral stalk. During catalysis, ATP synthesis in the catalytic domain of F(1) is coupled via a rotary mechanism of the central stalk subunits to proton translocation. Functionally, component of the F(0) channel, it forms part of the peripheral stalk, linking F(1) to F(0). This is ATP synthase subunit b from Vesicomyosocius okutanii subsp. Calyptogena okutanii (strain HA).